Consider the following 250-residue polypeptide: Trypsin (250 aa).

A signal peptide spans 1 to 15 (MRLLALLLMVGAAVA). The propeptide at 16-22 (VPREDGR) is activation peptide. The Peptidase S1 domain occupies 23-247 (IIGGHECAAH…FLGWIERTLE (225 aa)). 6 cysteine pairs are disulfide-bonded: Cys29–Cys163, Cys47–Cys63, Cys133–Cys236, Cys140–Cys209, Cys174–Cys188, and Cys199–Cys223. Active-site charge relay system residues include His62 and Asp106. The active-site Charge relay system is Ser203.

Belongs to the peptidase S1 family.

Its subcellular location is the secreted. The protein resides in the extracellular space. The enzyme catalyses Preferential cleavage: Arg-|-Xaa, Lys-|-Xaa.. In Pleuronectes platessa (European plaice), this protein is Trypsin.